We begin with the raw amino-acid sequence, 538 residues long: Chaperonin GroEL (538 aa).

ATP contacts are provided by residues Thr-29 to Pro-32, Asp-86 to Thr-90, Gly-413, Asn-476 to Ala-478, and Asp-492.

This sequence belongs to the chaperonin (HSP60) family. As to quaternary structure, forms a cylinder of 14 subunits composed of two heptameric rings stacked back-to-back. Interacts with the co-chaperonin GroES.

Its subcellular location is the cytoplasm. The catalysed reaction is ATP + H2O + a folded polypeptide = ADP + phosphate + an unfolded polypeptide.. Functionally, together with its co-chaperonin GroES, plays an essential role in assisting protein folding. The GroEL-GroES system forms a nano-cage that allows encapsulation of the non-native substrate proteins and provides a physical environment optimized to promote and accelerate protein folding. The protein is Chaperonin GroEL of Staphylococcus aureus (strain NCTC 8325 / PS 47).